The sequence spans 150 residues: Peptide deformylase (150 aa).

2 residues coordinate Fe cation: Cys-88 and His-130. Residue Glu-131 is part of the active site. Residue His-134 coordinates Fe cation.

The protein belongs to the polypeptide deformylase family. The cofactor is Fe(2+).

The catalysed reaction is N-terminal N-formyl-L-methionyl-[peptide] + H2O = N-terminal L-methionyl-[peptide] + formate. Its function is as follows. Removes the formyl group from the N-terminal Met of newly synthesized proteins. Requires at least a dipeptide for an efficient rate of reaction. N-terminal L-methionine is a prerequisite for activity but the enzyme has broad specificity at other positions. In Desulfitobacterium hafniense (strain DSM 10664 / DCB-2), this protein is Peptide deformylase.